The following is a 314-amino-acid chain: Olfactory receptor 6C6 (314 aa).

Over 1–24 (MKNKSMEIEFILLGLTDDPQLQIV) the chain is Extracellular. Asn-3 carries N-linked (GlcNAc...) asparagine glycosylation. A helical membrane pass occupies residues 25 to 45 (IFLFLFLNYTLSLMGNLIIII). Residues 46–63 (LTLLDPRLKTPMYFFLRN) lie on the Cytoplasmic side of the membrane. The helical transmembrane segment at 64-84 (FSFLEVIFTTVCIPRFLITIV) threads the bilayer. The Extracellular segment spans residues 85–95 (TRDKTISYNNC). Cys-95 and Cys-177 are oxidised to a cystine. Residues 96–116 (ATQLFFILLPGVTEFYLLAAM) form a helical membrane-spanning segment. At 117–141 (SYDRYVAICKPLHYPIIMSSKVCYQ) the chain is on the cytoplasmic side. A helical transmembrane segment spans residues 142-162 (LVLSSWVTGFLIIFPPLVMGL). At 163-199 (KLDFCASKTIDHFMCETSPILQISCTDTHVLELMSFT) the chain is on the extracellular side. A helical membrane pass occupies residues 200–220 (LAVVTLVVTLVLVILSYTCII). The Cytoplasmic segment spans residues 221–237 (KTILKFSSAQQRNKAFS). A helical transmembrane segment spans residues 238-258 (TCTSHMIVVSMTYGSCIFMYI). Residues 259–269 (KPSAKERVTVS) lie on the Extracellular side of the membrane. Residues 270–290 (KGVALLYTSIAPLLNPFIYTL) form a helical membrane-spanning segment. At 291–314 (RNQQVKEVFWDVLQKNLCFSKRPF) the chain is on the cytoplasmic side.

Belongs to the G-protein coupled receptor 1 family.

The protein resides in the cell membrane. In terms of biological role, odorant receptor. The protein is Olfactory receptor 6C6 (OR6C6) of Homo sapiens (Human).